Reading from the N-terminus, the 331-residue chain is 6-phosphogluconolactonase (331 aa).

N6-acetyllysine is present on lysine 287.

This sequence belongs to the cycloisomerase 2 family.

It carries out the reaction 6-phospho-D-glucono-1,5-lactone + H2O = 6-phospho-D-gluconate + H(+). It functions in the pathway carbohydrate degradation; pentose phosphate pathway; D-ribulose 5-phosphate from D-glucose 6-phosphate (oxidative stage): step 2/3. In terms of biological role, catalyzes the hydrolysis of 6-phosphogluconolactone to 6-phosphogluconate. This Escherichia coli O157:H7 protein is 6-phosphogluconolactonase.